The following is a 626-amino-acid chain: Alpha terpineol synthase, chloroplastic (626 aa).

Residues 1–38 (MALLSVAPLASKSRLHKTLITSAHHLKPSPTTIPTLPV) constitute a chloroplast transit peptide. Mg(2+) is bound by residues Asp377, Asp381, and Asp529. A DDXXD motif motif is present at residues 377 to 381 (DDIYD).

The protein belongs to the terpene synthase family. Tpsd subfamily. Mg(2+) is required as a cofactor. Mn(2+) serves as cofactor.

The protein resides in the plastid. Its subcellular location is the chloroplast. The enzyme catalyses (2E)-geranyl diphosphate + H2O = (S)-alpha-terpineol + diphosphate. It carries out the reaction (2E)-geranyl diphosphate + H2O = (R)-alpha-terpineol + diphosphate. It catalyses the reaction (2E)-geranyl diphosphate + H2O = (2E)-geraniol + diphosphate. The catalysed reaction is (2E)-geranyl diphosphate = terpinolene + diphosphate. The enzyme catalyses (2E)-geranyl diphosphate = (4S)-limonene + diphosphate. It participates in terpene metabolism; oleoresin biosynthesis. The protein operates within secondary metabolite biosynthesis; terpenoid biosynthesis. Functionally, monoterpene synthase (TPS) involved in the biosynthesis of monoterpene natural products included in conifer oleoresin secretions and volatile emissions; these compounds contribute to biotic and abiotic stress defense against herbivores and pathogens. Catalyzes the conversion of (2E)-geranyl diphosphate (GPP) to (-)-alpha-terpineol, (+)-alpha-terpineol and terpin-4-ol, and, to a lower extent, to geraniol, terpinolene and (-)-limonene. This chain is Alpha terpineol synthase, chloroplastic, found in Pinus banksiana (Jack pine).